The sequence spans 265 residues: 3-methyl-2-oxobutanoate hydroxymethyltransferase (265 aa).

The Mg(2+) site is built by Asp44 and Asp83. Residues 44 to 45 (DS), Asp83, and Lys113 contribute to the 3-methyl-2-oxobutanoate site. Position 115 (Glu115) interacts with Mg(2+). The active-site Proton acceptor is Glu183.

The protein belongs to the PanB family. In terms of assembly, homodecamer; pentamer of dimers. Mg(2+) is required as a cofactor.

Its subcellular location is the cytoplasm. It carries out the reaction 3-methyl-2-oxobutanoate + (6R)-5,10-methylene-5,6,7,8-tetrahydrofolate + H2O = 2-dehydropantoate + (6S)-5,6,7,8-tetrahydrofolate. It participates in cofactor biosynthesis; (R)-pantothenate biosynthesis; (R)-pantoate from 3-methyl-2-oxobutanoate: step 1/2. Catalyzes the reversible reaction in which hydroxymethyl group from 5,10-methylenetetrahydrofolate is transferred onto alpha-ketoisovalerate to form ketopantoate. The polypeptide is 3-methyl-2-oxobutanoate hydroxymethyltransferase (Leptospira borgpetersenii serovar Hardjo-bovis (strain JB197)).